The following is a 351-amino-acid chain: Methylthioribose-1-phosphate isomerase (351 aa).

Residues 55 to 57 (RGA), Arg-95, and Gln-202 each bind substrate. Asp-243 serves as the catalytic Proton donor. 253 to 254 (NK) contacts substrate.

This sequence belongs to the eIF-2B alpha/beta/delta subunits family. MtnA subfamily.

The enzyme catalyses 5-(methylsulfanyl)-alpha-D-ribose 1-phosphate = 5-(methylsulfanyl)-D-ribulose 1-phosphate. Its pathway is amino-acid biosynthesis; L-methionine biosynthesis via salvage pathway; L-methionine from S-methyl-5-thio-alpha-D-ribose 1-phosphate: step 1/6. Catalyzes the interconversion of methylthioribose-1-phosphate (MTR-1-P) into methylthioribulose-1-phosphate (MTRu-1-P). This chain is Methylthioribose-1-phosphate isomerase, found in Marinobacter nauticus (strain ATCC 700491 / DSM 11845 / VT8) (Marinobacter aquaeolei).